Consider the following 312-residue polypeptide: Glyoxylate/hydroxypyruvate reductase A (312 aa).

The active site involves R227. H275 functions as the Proton donor in the catalytic mechanism.

Belongs to the D-isomer specific 2-hydroxyacid dehydrogenase family. GhrA subfamily.

The protein localises to the cytoplasm. The enzyme catalyses glycolate + NADP(+) = glyoxylate + NADPH + H(+). It carries out the reaction (R)-glycerate + NAD(+) = 3-hydroxypyruvate + NADH + H(+). The catalysed reaction is (R)-glycerate + NADP(+) = 3-hydroxypyruvate + NADPH + H(+). In terms of biological role, catalyzes the NADPH-dependent reduction of glyoxylate and hydroxypyruvate into glycolate and glycerate, respectively. This chain is Glyoxylate/hydroxypyruvate reductase A, found in Escherichia coli O6:K15:H31 (strain 536 / UPEC).